We begin with the raw amino-acid sequence, 208 residues long: Ypt/Rab-type GTPase ypt71 (208 aa).

GTP is bound by residues 17–23, 33–40, glycine 66, 124–127, and 158–160; these read SGVGKTC, FSREYKAT, NQID, and SAK. An Effector region motif is present at residues 37–45; it reads YKATIGADF. S-geranylgeranyl cysteine attachment occurs at residues cysteine 206 and cysteine 208. Cysteine 208 carries the post-translational modification Cysteine methyl ester.

Belongs to the small GTPase superfamily. Rab family.

Its subcellular location is the vacuole membrane. Its activity is regulated as follows. Rab activation is generally mediated by a guanine exchange factor (GEF), while inactivation through hydrolysis of bound GTP is catalyzed by a GTPase activating protein (GAP). Its function is as follows. Ypt/Rab-type GTPases are key regulators of membrane trafficking and intracellular vesicular transport. They act as molecular switches that convert between GTP-bound and GDP-bound states, and regulate virtually all steps of membrane traffic from the formation of the transport vesicle at the donor membrane to its fusion at the target membrane. In the GDP-bound state, Ypt proteins are predominantly cytosolic, solubilized through the interaction with a GDP dissociation inhibitor (GDI). In the GTP-bound state, the proteins are membrane bound and interact with specific effector proteins that select cargo, promote vesicle movement, or verify the correct site of fusion. Act antagonistically to ypt7 in regulating vacuolar morphology, promoting vacuolar fission. The chain is Ypt/Rab-type GTPase ypt71 (ypt71) from Schizosaccharomyces pombe (strain 972 / ATCC 24843) (Fission yeast).